The sequence spans 363 residues: Phosphoribosylformylglycinamidine cyclo-ligase (363 aa).

The protein belongs to the AIR synthase family.

It is found in the cytoplasm. The enzyme catalyses 2-formamido-N(1)-(5-O-phospho-beta-D-ribosyl)acetamidine + ATP = 5-amino-1-(5-phospho-beta-D-ribosyl)imidazole + ADP + phosphate + H(+). Its pathway is purine metabolism; IMP biosynthesis via de novo pathway; 5-amino-1-(5-phospho-D-ribosyl)imidazole from N(2)-formyl-N(1)-(5-phospho-D-ribosyl)glycinamide: step 2/2. In Parvibaculum lavamentivorans (strain DS-1 / DSM 13023 / NCIMB 13966), this protein is Phosphoribosylformylglycinamidine cyclo-ligase.